The chain runs to 206 residues: Small ribosomal subunit protein uS4 (206 aa).

Residues 96-159 (SRLDNVVYRM…KKQARIVEGL (64 aa)) enclose the S4 RNA-binding domain.

Belongs to the universal ribosomal protein uS4 family. As to quaternary structure, part of the 30S ribosomal subunit. Contacts protein S5. The interaction surface between S4 and S5 is involved in control of translational fidelity.

Functionally, one of the primary rRNA binding proteins, it binds directly to 16S rRNA where it nucleates assembly of the body of the 30S subunit. Its function is as follows. With S5 and S12 plays an important role in translational accuracy. This chain is Small ribosomal subunit protein uS4, found in Chromobacterium violaceum (strain ATCC 12472 / DSM 30191 / JCM 1249 / CCUG 213 / NBRC 12614 / NCIMB 9131 / NCTC 9757 / MK).